The chain runs to 247 residues: Opacity protein opA52 (247 aa).

Alanine 1 is a signal peptide.

The protein belongs to the opacity porin family.

Its subcellular location is the cell outer membrane. In terms of biological role, implicated in a number of adherence functions. OPA proteins are implicated in pathogenesis and are subject to phase variation. The polypeptide is Opacity protein opA52 (opaG) (Neisseria gonorrhoeae).